We begin with the raw amino-acid sequence, 636 residues long: Molybdenum cofactor biosynthesis protein 1 (636 aa).

Residues 1 to 383 form a molybdenum cofactor biosynthesis protein A region; that stretch reads MAARPAFGIV…QMKNRPMILI (383 aa). Positions 19-40 are disordered; the sequence is RGCSSGAPVTQPRPGEPSRPTR. Residue S64 is modified to Phosphoserine. The region spanning 64-279 is the Radical SAM core domain; sequence SFGRQHSYLR…TIRQRWPGLE (216 aa). R73 lines the GTP pocket. 2 residues coordinate [4Fe-4S] cluster: C80 and C84. Y86 contacts S-adenosyl-L-methionine. [4Fe-4S] cluster is bound at residue C87. R123 lines the GTP pocket. Residue G127 participates in S-adenosyl-L-methionine binding. A GTP-binding site is contributed by T154. Residue S178 participates in S-adenosyl-L-methionine binding. N6-acetyllysine is present on K198. K215 contributes to the GTP binding site. An S-adenosyl-L-methionine-binding site is contributed by M249. [4Fe-4S] cluster-binding residues include C312 and C315. 317–319 provides a ligand contact to GTP; it reads RLR. C329 contributes to the [4Fe-4S] cluster binding site. A molybdenum cofactor biosynthesis protein C region spans residues 414 to 636; sequence QCLSDQMASL…GGQRGDFHRA (223 aa). The segment at 444–484 is disordered; the sequence is SPQRHYSSYPDPDTHSKCLSTGSQAPDAPSGPGPTSNQLTH. K528 carries the N6-acetyllysine modification. The active-site For molybdenum cofactor biosynthesis protein C activity is the D606.

It in the C-terminal section; belongs to the MoaC family. In the N-terminal section; belongs to the radical SAM superfamily. MoaA family. Isoform Mocs1a and isoform Mocs1b probably form a heterooligomer. [4Fe-4S] cluster is required as a cofactor.

The catalysed reaction is GTP + AH2 + S-adenosyl-L-methionine = (8S)-3',8-cyclo-7,8-dihydroguanosine 5'-triphosphate + 5'-deoxyadenosine + L-methionine + A + H(+). It carries out the reaction (8S)-3',8-cyclo-7,8-dihydroguanosine 5'-triphosphate = cyclic pyranopterin phosphate + diphosphate. It participates in cofactor biosynthesis; molybdopterin biosynthesis. Isoform Mocs1a and isoform Mocs1b probably form a complex that catalyzes the conversion of 5'-GTP to cyclic pyranopterin monophosphate (cPMP). Mocs1a catalyzes the cyclization of GTP to (8S)-3',8-cyclo-7,8-dihydroguanosine 5'-triphosphate and Mocs1b catalyzes the subsequent conversion of (8S)-3',8-cyclo-7,8-dihydroguanosine 5'-triphosphate to cPMP. The sequence is that of Molybdenum cofactor biosynthesis protein 1 (Mocs1) from Mus musculus (Mouse).